The chain runs to 354 residues: MDLTVEPNLHSLITSTTHKWIFVGGKGGVGKTTSSCSIAIQMALSQPNKQFLLISTDPAHNLSDAFGEKFGKDARKVTGMNNLSCMEIDPSAALKDMNDMAVSRANNNGSDGQGDDLGSLLQGGALADLTGSIPGIDEALSFMEVMKHIKRQEQGEGETFDTVIFDTAPTGHTLRFLQLPNTLSKLLEKFGEITNKLGPMLNSFMGAGNVDISGKLNELKANVETIRQQFTDPDLTTFVCVCISEFLSLYETERLIQELISYDMDVNSIIVNQLLFAENDQEHNCKRCQARWKMQKKYLDQIDELYEDFHVVKMPLCAGEIRGLNNLTKFSQFLNKEYNPITDGKVIYELEDKE.

Lysine 26–threonine 33 serves as a coordination point for ATP. Aspartate 57 is an active-site residue. The ATP site is built by glutamate 245 and asparagine 272. Residues cysteine 285 and cysteine 288 each contribute to the Zn(2+) site.

Belongs to the arsA ATPase family. As to quaternary structure, homodimer. Component of the Golgi to ER traffic (GET) complex, which is composed of GET1, GET2 and GET3. Within the complex, GET1 and GET2 form a heterotetramer which is stabilized by phosphatidylinositol binding and which binds to the GET3 homodimer. Interacts with the chloride channel protein GEF1.

It localises to the cytoplasm. Its subcellular location is the endoplasmic reticulum. The protein localises to the golgi apparatus. ATPase required for the post-translational delivery of tail-anchored (TA) proteins to the endoplasmic reticulum. Recognizes and selectively binds the transmembrane domain of TA proteins in the cytosol. This complex then targets to the endoplasmic reticulum by membrane-bound receptors GET1 and GET2, where the tail-anchored protein is released for insertion. This process is regulated by ATP binding and hydrolysis. ATP binding drives the homodimer towards the closed dimer state, facilitating recognition of newly synthesized TA membrane proteins. ATP hydrolysis is required for insertion. Subsequently, the homodimer reverts towards the open dimer state, lowering its affinity for the GET1-GET2 receptor, and returning it to the cytosol to initiate a new round of targeting. Cooperates with the HDEL receptor ERD2 to mediate the ATP-dependent retrieval of resident ER proteins that contain a C-terminal H-D-E-L retention signal from the Golgi to the ER. Involved in low-level resistance to the oxyanions arsenite and arsenate, and in heat tolerance. This is ATPase GET3 from Saccharomyces cerevisiae (strain RM11-1a) (Baker's yeast).